A 479-amino-acid chain; its full sequence is Probable polyamine transporter At3g19553 (479 aa).

The next 12 helical transmembrane spans lie at 22-42, 53-73, 86-106, 130-150, 160-180, 236-256, 275-295, 304-324, 332-352, 355-375, 395-415, and 420-440; these read LTLLPLVFLIFYEVSGGPFGV, LLALLGFLIFPLIWSIPEALV, GYVVWISSAFGPFWGFQEGFW, FPVLDHVAARVPALLVITFSL, IVGFSAVVLAVFSLCPFVVMA, ALFGAVLLVMGSYLIPLMAGT, VGMLIGGVWLKGWIQAAAAMS, MSSDAFQLLGMSEIGMLPAFF, TPTISILCSATGVIFLSWMSF, IIEFLNFLYALGMLLEFAAFV, FGVSMLCLPPSLLVILVMVLA, and FLISGVIIVLGFCLYPFLTLV. A disordered region spans residues 454–479; the sequence is RPVSGVSSESQLDEEHGDESAASLLP.

It belongs to the amino acid-polyamine-organocation (APC) superfamily. Polyamine:cation symporter (PHS) (TC 2.A.3.12) family.

It is found in the cell membrane. Its function is as follows. Probable cell membrane polyamine/proton symporter involved in the polyamine uptake in cells. In Arabidopsis thaliana (Mouse-ear cress), this protein is Probable polyamine transporter At3g19553.